A 525-amino-acid chain; its full sequence is GMP synthase [glutamine-hydrolyzing] (525 aa).

One can recognise a Glutamine amidotransferase type-1 domain in the interval arginine 9 to leucine 207. The Nucleophile role is filled by cysteine 86. Residues histidine 181 and glutamate 183 contribute to the active site. A GMPS ATP-PPase domain is found at tryptophan 208–arginine 400. Serine 235 to alanine 241 is an ATP binding site.

In terms of assembly, homodimer.

The catalysed reaction is XMP + L-glutamine + ATP + H2O = GMP + L-glutamate + AMP + diphosphate + 2 H(+). It functions in the pathway purine metabolism; GMP biosynthesis; GMP from XMP (L-Gln route): step 1/1. Catalyzes the synthesis of GMP from XMP. In Hamiltonella defensa subsp. Acyrthosiphon pisum (strain 5AT), this protein is GMP synthase [glutamine-hydrolyzing].